The chain runs to 453 residues: Allantoinase (453 aa).

Residues H59, H61, K146, H186, H242, and D315 each contribute to the Zn(2+) site. The residue at position 146 (K146) is an N6-carboxylysine.

It belongs to the metallo-dependent hydrolases superfamily. Allantoinase family. Homotetramer. Zn(2+) serves as cofactor. Carboxylation allows a single lysine to coordinate two zinc ions.

It catalyses the reaction (S)-allantoin + H2O = allantoate + H(+). The protein operates within nitrogen metabolism; (S)-allantoin degradation; allantoate from (S)-allantoin: step 1/1. In terms of biological role, catalyzes the conversion of allantoin (5-ureidohydantoin) to allantoic acid by hydrolytic cleavage of the five-member hydantoin ring. The chain is Allantoinase from Escherichia coli (strain 55989 / EAEC).